Reading from the N-terminus, the 116-residue chain is Large ribosomal subunit protein bL20 (116 aa).

It belongs to the bacterial ribosomal protein bL20 family.

Its function is as follows. Binds directly to 23S ribosomal RNA and is necessary for the in vitro assembly process of the 50S ribosomal subunit. It is not involved in the protein synthesizing functions of that subunit. The sequence is that of Large ribosomal subunit protein bL20 from Picosynechococcus sp. (strain ATCC 27264 / PCC 7002 / PR-6) (Agmenellum quadruplicatum).